The sequence spans 901 residues: Pyruvate, phosphate dikinase (901 aa).

The interval 1–321 (MNIAKSIHFL…WLIEQKPVEA (321 aa)) is N-terminal. A linker 1 region spans residues 322-380 (KSTISLVRLLLDLYEREVVDAEYVVKSVKPGQLNEILHPVIDMTSVTGLKSSQGGIIGV). The interval 381–482 (PGAAVGRVYF…TINEGDFVTL (102 aa)) is central. Residue Ser440 is modified to Phosphoserine; by PDRP1. Catalysis depends on His442, which acts as the Tele-phosphohistidine intermediate. The tract at residues 483–522 (NVPYYGESTLYMGAAQLIEPDPETSGLVSFIELAKGFVRS) is linker 2. Residues 523–901 (FHVRANADSP…SAKSGGRRAR (379 aa)) are C-terminal. Residues Arg550, Arg606, Glu750, Gly771, Thr772, Asn773, and Asp774 each coordinate substrate. Residue Glu750 participates in Mg(2+) binding. Residue Asp774 coordinates Mg(2+). Cys835 serves as the catalytic Proton donor. The segment at 879–901 (EKEGRKPAWRGRSSAKSGGRRAR) is disordered.

The protein belongs to the PEP-utilizing enzyme family. In terms of assembly, homodimer. Requires Mg(2+) as cofactor. Phosphorylation of Ser-440 in the dark inactivates the enzyme. Dephosphorylation upon light stimulation reactivates the enzyme.

The enzyme catalyses pyruvate + phosphate + ATP = phosphoenolpyruvate + AMP + diphosphate + H(+). Activated by light-induced dephosphorylation. Inhibited by dark-induced phosphorylation. Both reactions are catalyzed by PDRP1. Catalyzes the reversible phosphorylation of pyruvate and phosphate. This chain is Pyruvate, phosphate dikinase (ppdK), found in Treponema pallidum (strain Nichols).